Consider the following 750-residue polypeptide: Protein O-mannosyl-transferase 2 (750 aa).

A disordered region spans residues 1–23; that stretch reads MPPATGGGLAESELRPRRGRCGP. S41 carries the phosphoserine modification. Residues 54 to 74 form a helical membrane-spanning segment; the sequence is AVGWWALLALVTLLSFATRFH. N98 is a glycosylation site (N-linked (GlcNAc...) asparagine). 5 helical membrane-spanning segments follow: residues 100-120, 146-166, 191-211, 231-251, and 283-303; these read TFFF…AGYL, GFCA…VLDL, QYIL…LSMV, LTGV…FIIL, and VLCL…VHFM. A glycan (N-linked (GlcNAc...) asparagine) is linked at N330. MIR domains lie at 334 to 390, 403 to 459, and 464 to 521; these read PEHL…IKKH, VEFV…IEVV, and GNRI…VEDH. Residue N445 is glycosylated (N-linked (GlcNAc...) asparagine). Residues N528 and N583 are each glycosylated (N-linked (GlcNAc...) asparagine). Helical transmembrane passes span 596-616, 643-663, 665-685, and 700-720; these read VVWW…SIIA, VLLG…VLYF, HYFP…DTLL, and GIHV…FYLF.

This sequence belongs to the glycosyltransferase 39 family. As to quaternary structure, interacts with POMT1. In terms of processing, N-glycosylated. As to expression, highly expressed in testis; detected at low levels in most tissues.

Its subcellular location is the endoplasmic reticulum membrane. The enzyme catalyses a di-trans,poly-cis-dolichyl beta-D-mannosyl phosphate + L-seryl-[protein] = 3-O-(alpha-D-mannosyl)-L-seryl-[protein] + a di-trans,poly-cis-dolichyl phosphate + H(+). It catalyses the reaction a di-trans,poly-cis-dolichyl beta-D-mannosyl phosphate + L-threonyl-[protein] = 3-O-(alpha-D-mannosyl)-L-threonyl-[protein] + a di-trans,poly-cis-dolichyl phosphate + H(+). It participates in protein modification; protein glycosylation. Slightly activated by Mg(2+) and inhibited by both Ca(+) and Mn(2+). EDTA ha no effect on activity in vitro. Its function is as follows. Transfers mannosyl residues to the hydroxyl group of serine or threonine residues. Coexpression of both POMT1 and POMT2 is necessary for enzyme activity, expression of either POMT1 or POMT2 alone is insufficient. Essentially dedicated to O-mannosylation of alpha-DAG1 and few other proteins but not of cadherins and protocaherins. The chain is Protein O-mannosyl-transferase 2 (POMT2) from Homo sapiens (Human).